The following is a 557-amino-acid chain: MRSDMIKKGFDKAPHRSLLKATGLKDEDFDKPFIAICNSFIEIIPGHKHLNEFGKLVKEAVRAAGMVPFEFNTIGVDDGIAMGHIGMRYSLPSREIIADSVETVVNAHWFDGMICIPNCDKITPGMMMAALRINIPTVFVSGGPMAAGKTSKGDVVDLSSVFEGVGAYQSGKISEEELKDIEDHGCPSCGSCSGMFTANSMNCLCEVLGLALPGNGSILAIDPRREELIKQAAEKLKILIERDIKPRDIVTEEAIDDAFALDMAMGGSTNTVLHTLALAQEAGLDYDMNRIDAVSRRVPHLCKVSPASNWHMEDIDRAGGISAILKEMSRKEGVLHLDRITATGQTLRENIAHAEIKDKEVIHSLENPHSEEGGLRILKGNLAKDGAVIKSGATEVKRFEGPCVIFNSQDEALAGIMLGKVKKGDVVVIRYEGPRGGPGMPEMLAPTSAIAGMGLGADVALLTDGRFSGASRGISVGHISPEAAAGGTIALLEQGDIVCIDVEERLLEVRVSDEELDKRKKEWKRPEPKVKTGWLGRYAQMVTSANTGAVLKIPNFD.

Asp78 is a binding site for Mg(2+). Cys119 contacts [2Fe-2S] cluster. Mg(2+) contacts are provided by Asp120 and Lys121. Position 121 is an N6-carboxylysine (Lys121). Residue Cys192 coordinates [2Fe-2S] cluster. Glu442 is a binding site for Mg(2+). The Proton acceptor role is filled by Ser468.

This sequence belongs to the IlvD/Edd family. As to quaternary structure, homodimer. It depends on [2Fe-2S] cluster as a cofactor. The cofactor is Mg(2+).

The enzyme catalyses (2R)-2,3-dihydroxy-3-methylbutanoate = 3-methyl-2-oxobutanoate + H2O. It catalyses the reaction (2R,3R)-2,3-dihydroxy-3-methylpentanoate = (S)-3-methyl-2-oxopentanoate + H2O. It functions in the pathway amino-acid biosynthesis; L-isoleucine biosynthesis; L-isoleucine from 2-oxobutanoate: step 3/4. It participates in amino-acid biosynthesis; L-valine biosynthesis; L-valine from pyruvate: step 3/4. In terms of biological role, functions in the biosynthesis of branched-chain amino acids. Catalyzes the dehydration of (2R,3R)-2,3-dihydroxy-3-methylpentanoate (2,3-dihydroxy-3-methylvalerate) into 2-oxo-3-methylpentanoate (2-oxo-3-methylvalerate) and of (2R)-2,3-dihydroxy-3-methylbutanoate (2,3-dihydroxyisovalerate) into 2-oxo-3-methylbutanoate (2-oxoisovalerate), the penultimate precursor to L-isoleucine and L-valine, respectively. This Bacillus cereus (strain 03BB102) protein is Dihydroxy-acid dehydratase.